A 351-amino-acid polypeptide reads, in one-letter code: Cytochrome c biogenesis protein CcsA (351 aa).

8 helical membrane-spanning segments follow: residues 17–37 (VLFL…LPAI), 38–58 (NALG…LLGA), 68–88 (LSNL…VHLI), 97–117 (LVGV…TLTL), 143–163 (MMLS…FLVI), 259–279 (IIGL…VWAN), 286–306 (WSWD…AAYL), and 320–340 (AILA…VNLL).

It belongs to the CcmF/CycK/Ccl1/NrfE/CcsA family. May interact with ccs1.

The protein localises to the cellular thylakoid membrane. Its function is as follows. Required during biogenesis of c-type cytochromes (cytochrome c6 and cytochrome f) at the step of heme attachment. This is Cytochrome c biogenesis protein CcsA from Nostoc sp. (strain PCC 7120 / SAG 25.82 / UTEX 2576).